The following is a 229-amino-acid chain: DNA polymerase III subunit epsilon (229 aa).

Residues D10 and E12 each contribute to the a divalent metal cation site. The substrate site is built by D10, E12, E55, and H60. H156 (proton acceptor) is an active-site residue. D161 is an a divalent metal cation binding site. D161 serves as a coordination point for substrate.

As to quaternary structure, DNA polymerase III contains a core (composed of alpha, epsilon and theta chains) that associates with a tau subunit. This core dimerizes to form the POLIII' complex. PolIII' associates with the gamma complex (composed of gamma, delta, delta', psi and chi chains) and with the beta chain to form the complete DNA polymerase III complex. The cofactor is Mg(2+). Mn(2+) is required as a cofactor.

The enzyme catalyses DNA(n) + a 2'-deoxyribonucleoside 5'-triphosphate = DNA(n+1) + diphosphate. Its function is as follows. DNA polymerase III is a complex, multichain enzyme responsible for most of the replicative synthesis in bacteria. The epsilon subunit contain the editing function and is a proofreading 3'-5' exonuclease. This chain is DNA polymerase III subunit epsilon (dnaQ), found in Rickettsia typhi (strain ATCC VR-144 / Wilmington).